Reading from the N-terminus, the 131-residue chain is Profilin-6 (131 aa).

An intrachain disulfide couples C13 to C115. Residues A81 to T97 carry the Involved in PIP2 interaction motif. T111 carries the phosphothreonine modification.

Belongs to the profilin family. As to quaternary structure, occurs in many kinds of cells as a complex with monomeric actin in a 1:1 ratio. Post-translationally, phosphorylated by MAP kinases.

Its subcellular location is the cytoplasm. It localises to the cytoskeleton. Its function is as follows. Binds to actin and affects the structure of the cytoskeleton. At high concentrations, profilin prevents the polymerization of actin, whereas it enhances it at low concentrations. This is Profilin-6 from Phleum pratense (Common timothy).